A 249-amino-acid chain; its full sequence is Putative nicotinamide mononucleotide adenylyltransferase (249 aa).

NAD(+) contacts are provided by serine 40 and phenylalanine 41. Residue histidine 48 participates in ATP binding. NAD(+)-binding residues include threonine 97, glycine 129, aspartate 131, arginine 165, and asparagine 206. 214–217 (TRAR) contacts ATP.

It belongs to the eukaryotic NMN adenylyltransferase family. POF1 subfamily.

It is found in the cytoplasm. Its subcellular location is the nucleus. The catalysed reaction is beta-nicotinamide D-ribonucleotide + ATP + H(+) = diphosphate + NAD(+). It functions in the pathway cofactor biosynthesis; NAD(+) biosynthesis; NAD(+) from nicotinamide D-ribonucleotide: step 1/1. Catalyzes the formation of NAD(+) from nicotinamide mononucleotide (NMN) and ATP. Involved in the salvage pathway for NAD(+) biosynthesis via NMN. In Schizosaccharomyces pombe (strain 972 / ATCC 24843) (Fission yeast), this protein is Putative nicotinamide mononucleotide adenylyltransferase.